The chain runs to 61 residues: MFTLKKSLLLLFFLGVINVSLCEEERDADEEERRDDPEERDVEVEKRFFPLALLCKVFKKC.

Positions 1-22 (MFTLKKSLLLLFFLGVINVSLC) are cleaved as a signal peptide. A propeptide spanning residues 23 to 45 (EEERDADEEERRDDPEERDVEVE) is cleaved from the precursor. C55 and C61 are disulfide-bonded.

It belongs to the frog skin active peptide (FSAP) family. Brevinin subfamily. As to expression, expressed by the skin glands.

It is found in the secreted. Its function is as follows. Antimicrobial peptide. Has low activity against the Gram-positive bacterium S.aureus (MIC&gt;100 uM) and the Gram-negative bacterium E.coli (MIC=25 uM). Lacks hemolytic activity against human erythrocytes. In Rana dybowskii (Dybovsky's frog), this protein is Japonicin-1CDYa.